A 119-amino-acid polypeptide reads, in one-letter code: U-scoloptoxin(16)-Er11a (119 aa).

A signal peptide spans 1–19 (MKSWTAAVLSLGLIYLSIS).

It belongs to the scoloptoxin-16 family. In terms of processing, contains 4 disulfide bonds. Expressed by the venom gland.

The protein resides in the secreted. The sequence is that of U-scoloptoxin(16)-Er11a from Ethmostigmus rubripes (Giant centipede).